Here is a 180-residue protein sequence, read N- to C-terminus: Stathmin-3 (180 aa).

2 S-palmitoyl cysteine lipidation sites follow: cysteine 22 and cysteine 24. One can recognise an SLD domain in the interval 38 to 180; that stretch reads GDMEVKQLDK…NKEQREEMSG (143 aa). Serine 50, serine 60, serine 65, serine 68, serine 72, serine 73, and serine 81 each carry phosphoserine. Positions 60 to 74 are enriched in low complexity; that stretch reads SPSDLSPESPVLSSP. Positions 60-81 are disordered; it reads SPSDLSPESPVLSSPPKRKDAS. Residues 75–179 adopt a coiled-coil conformation; it reads PKRKDASLEE…RNKEQREEMS (105 aa).

It belongs to the stathmin family. Interacts with STAT3. Interacts with CLU (secreted form); this interaction may act as an important modulator during neuronal differentiation. Post-translationally, N-terminal palmitoylation promotes specific anchoring to the cytosolic leaflet of Golgi membranes and subsequent vesicular trafficking along dendrites and axons. Neuronal Stathmins are substrates for palmitoyltransferases ZDHHC3, ZDHHC7 and ZDHHC15. Neuron specific.

It localises to the golgi apparatus. It is found in the cell projection. The protein localises to the growth cone. The protein resides in the axon. Its subcellular location is the cytoplasm. It localises to the cytosol. Its function is as follows. Exhibits microtubule-destabilizing activity, which is antagonized by STAT3. This is Stathmin-3 (Stmn3) from Mus musculus (Mouse).